The chain runs to 76 residues: ATP synthase subunit c (76 aa).

2 consecutive transmembrane segments (helical) span residues 8–28 (LLAA…GVGI) and 55–75 (VAFA…LIFV).

This sequence belongs to the ATPase C chain family. As to quaternary structure, F-type ATPases have 2 components, F(1) - the catalytic core - and F(0) - the membrane proton channel. F(1) has five subunits: alpha(3), beta(3), gamma(1), delta(1), epsilon(1). F(0) has three main subunits: a(1), b(2) and c(10-14). The alpha and beta chains form an alternating ring which encloses part of the gamma chain. F(1) is attached to F(0) by a central stalk formed by the gamma and epsilon chains, while a peripheral stalk is formed by the delta and b chains.

It is found in the cell membrane. Functionally, f(1)F(0) ATP synthase produces ATP from ADP in the presence of a proton or sodium gradient. F-type ATPases consist of two structural domains, F(1) containing the extramembraneous catalytic core and F(0) containing the membrane proton channel, linked together by a central stalk and a peripheral stalk. During catalysis, ATP synthesis in the catalytic domain of F(1) is coupled via a rotary mechanism of the central stalk subunits to proton translocation. Its function is as follows. Key component of the F(0) channel; it plays a direct role in translocation across the membrane. A homomeric c-ring of between 10-14 subunits forms the central stalk rotor element with the F(1) delta and epsilon subunits. The protein is ATP synthase subunit c of Dehalococcoides mccartyi (strain ATCC BAA-2266 / KCTC 15142 / 195) (Dehalococcoides ethenogenes (strain 195)).